We begin with the raw amino-acid sequence, 292 residues long: Small ribosomal subunit protein uS9m (292 aa).

The interval 273 to 292 is disordered; sequence VERKKPGKRKARKMPTWVKR.

Belongs to the universal ribosomal protein uS9 family.

It is found in the mitochondrion. The sequence is that of Small ribosomal subunit protein uS9m (MRPS9) from Kluyveromyces marxianus (Yeast).